Reading from the N-terminus, the 143-residue chain is Nucleoside diphosphate kinase (143 aa).

ATP is bound by residues lysine 11, phenylalanine 59, arginine 87, threonine 93, arginine 104, and asparagine 114. The Pros-phosphohistidine intermediate role is filled by histidine 117.

It belongs to the NDK family. Homotetramer. Mg(2+) is required as a cofactor.

It is found in the cytoplasm. The enzyme catalyses a 2'-deoxyribonucleoside 5'-diphosphate + ATP = a 2'-deoxyribonucleoside 5'-triphosphate + ADP. It catalyses the reaction a ribonucleoside 5'-diphosphate + ATP = a ribonucleoside 5'-triphosphate + ADP. Functionally, major role in the synthesis of nucleoside triphosphates other than ATP. The ATP gamma phosphate is transferred to the NDP beta phosphate via a ping-pong mechanism, using a phosphorylated active-site intermediate. The chain is Nucleoside diphosphate kinase from Shewanella piezotolerans (strain WP3 / JCM 13877).